We begin with the raw amino-acid sequence, 332 residues long: D-galactose/methyl-galactoside binding periplasmic protein MglB (332 aa).

A signal peptide spans 1–23 (MNKKVLTLSAVMASMLFGAAAHA). Beta-D-galactose contacts are provided by aspartate 37 and asparagine 114. Aspartate 37 and asparagine 114 together coordinate beta-D-glucose. 5 residues coordinate Ca(2+): aspartate 157, asparagine 159, aspartate 161, glutamine 163, and glutamine 165. 3 residues coordinate beta-D-galactose: histidine 175, aspartate 177, and arginine 181. 3 residues coordinate beta-D-glucose: histidine 175, aspartate 177, and arginine 181. A Ca(2+)-binding site is contributed by glutamate 228. Residues asparagine 234, aspartate 259, and asparagine 279 each coordinate beta-D-galactose. Asparagine 234, aspartate 259, and asparagine 279 together coordinate beta-D-glucose.

Belongs to the bacterial solute-binding protein 2 family. The ABC transporter complex is composed of one ATP-binding protein (MglA), two transmembrane proteins (MglC) and a solute-binding protein (MglB).

The protein resides in the periplasm. Its function is as follows. Part of the ABC transporter complex MglABC involved in galactose/methyl galactoside import. In addition, binds D-galactose and D-glucose and plays a role in the chemotaxis towards these two sugars by interacting with the Trg chemoreceptor. The chain is D-galactose/methyl-galactoside binding periplasmic protein MglB (mglB) from Escherichia coli O6:H1 (strain CFT073 / ATCC 700928 / UPEC).